We begin with the raw amino-acid sequence, 215 residues long: Cytochrome b6 (215 aa).

A helical membrane pass occupies residues 32–52 (IFYCLGGITLVCFLIQFATGF). Cys35 lines the heme c pocket. His86 and His100 together coordinate heme b. 3 consecutive transmembrane segments (helical) span residues 90-110 (ASMMVLMMILHVFRVYLTGGF), 116-136 (LTWVSGVILAVITVSFGVTGY), and 186-206 (AHTFVLPWLIAVFMLFHFLMI). Heme b is bound by residues His187 and His202.

The protein belongs to the cytochrome b family. PetB subfamily. The 4 large subunits of the cytochrome b6-f complex are cytochrome b6, subunit IV (17 kDa polypeptide, PetD), cytochrome f and the Rieske protein, while the 4 small subunits are PetG, PetL, PetM and PetN. The complex functions as a dimer. Heme b is required as a cofactor. It depends on heme c as a cofactor.

Its subcellular location is the cellular thylakoid membrane. In terms of biological role, component of the cytochrome b6-f complex, which mediates electron transfer between photosystem II (PSII) and photosystem I (PSI), cyclic electron flow around PSI, and state transitions. This Nostoc punctiforme (strain ATCC 29133 / PCC 73102) protein is Cytochrome b6.